The sequence spans 93 residues: uncharacterized protein (93 aa).

A signal peptide spans 1–11; that stretch reads MALMVLMALVG. Cys12 carries N-palmitoyl cysteine lipidation. Residue Cys12 is the site of S-diacylglycerol cysteine attachment.

The protein localises to the cell membrane. This is an uncharacterized protein from Escherichia coli O6:K15:H31 (strain 536 / UPEC).